Here is a 427-residue protein sequence, read N- to C-terminus: Glutamate-1-semialdehyde 2,1-aminomutase (427 aa).

The residue at position 265 (Lys265) is an N6-(pyridoxal phosphate)lysine.

Belongs to the class-III pyridoxal-phosphate-dependent aminotransferase family. HemL subfamily. Homodimer. Pyridoxal 5'-phosphate is required as a cofactor.

It is found in the cytoplasm. It carries out the reaction (S)-4-amino-5-oxopentanoate = 5-aminolevulinate. The protein operates within porphyrin-containing compound metabolism; protoporphyrin-IX biosynthesis; 5-aminolevulinate from L-glutamyl-tRNA(Glu): step 2/2. The sequence is that of Glutamate-1-semialdehyde 2,1-aminomutase from Burkholderia orbicola (strain MC0-3).